A 129-amino-acid chain; its full sequence is uncharacterized protein (129 aa).

The chain crosses the membrane as a helical span at residues 8–24 (YLILFITIIAICSLFRI).

It is found in the membrane. This is an uncharacterized protein from Rickettsia prowazekii (strain Madrid E).